The following is a 267-amino-acid chain: Malonyl-[acyl-carrier protein] O-methyltransferase (267 aa).

Belongs to the methyltransferase superfamily.

It carries out the reaction malonyl-[ACP] + S-adenosyl-L-methionine = malonyl-[ACP] methyl ester + S-adenosyl-L-homocysteine. It participates in cofactor biosynthesis; biotin biosynthesis. Functionally, converts the free carboxyl group of a malonyl-thioester to its methyl ester by transfer of a methyl group from S-adenosyl-L-methionine (SAM). It allows to synthesize pimeloyl-ACP via the fatty acid synthetic pathway. The polypeptide is Malonyl-[acyl-carrier protein] O-methyltransferase (Geobacter sulfurreducens (strain ATCC 51573 / DSM 12127 / PCA)).